Consider the following 509-residue polypeptide: Maturase K (509 aa).

It belongs to the intron maturase 2 family. MatK subfamily.

The protein localises to the plastid. Its subcellular location is the chloroplast. Usually encoded in the trnK tRNA gene intron. Probably assists in splicing its own and other chloroplast group II introns. The protein is Maturase K of Atropa belladonna (Belladonna).